The following is a 228-amino-acid chain: Protein-L-isoaspartate O-methyltransferase (228 aa).

The active site involves serine 74.

It belongs to the methyltransferase superfamily. L-isoaspartyl/D-aspartyl protein methyltransferase family.

The protein resides in the cytoplasm. The catalysed reaction is [protein]-L-isoaspartate + S-adenosyl-L-methionine = [protein]-L-isoaspartate alpha-methyl ester + S-adenosyl-L-homocysteine. Its function is as follows. Catalyzes the methyl esterification of L-isoaspartyl residues in peptides and proteins that result from spontaneous decomposition of normal L-aspartyl and L-asparaginyl residues. It plays a role in the repair and/or degradation of damaged proteins. In Methylorubrum extorquens (strain PA1) (Methylobacterium extorquens), this protein is Protein-L-isoaspartate O-methyltransferase.